Here is a 316-residue protein sequence, read N- to C-terminus: Transaldolase (316 aa).

The active-site Schiff-base intermediate with substrate is the Lys-126.

The protein belongs to the transaldolase family. Type 1 subfamily. Homodimer.

The protein resides in the cytoplasm. It catalyses the reaction D-sedoheptulose 7-phosphate + D-glyceraldehyde 3-phosphate = D-erythrose 4-phosphate + beta-D-fructose 6-phosphate. It functions in the pathway carbohydrate degradation; pentose phosphate pathway; D-glyceraldehyde 3-phosphate and beta-D-fructose 6-phosphate from D-ribose 5-phosphate and D-xylulose 5-phosphate (non-oxidative stage): step 2/3. Its function is as follows. Transaldolase is important for the balance of metabolites in the pentose-phosphate pathway. In Methylibium petroleiphilum (strain ATCC BAA-1232 / LMG 22953 / PM1), this protein is Transaldolase.